The primary structure comprises 298 residues: MGRGNSTEVTEFHLLGFGVQHEFQHVLFIVLLLIYVTSLIGNIGMILLIKTDSRLQTPMYFFPQHLAFVDICYTSAITPKMLQSFTEENNLITFRGCVIQFLVYATFATSDCYLLAIMAMDCYVAICKPLRYPMIMSQTVYIQLVAGSYIIGSINASVHTGFTFSLSFCKSNKINHFFCDGLPILALSCSNIDINIILDVVFVGFDLMFTELVIIFSYIYIMVTILKMSSTAGRKKSFSTCASHLTAVTIFYGTLSYMYLQPQSNNSQENMKVASIFYGTVIPMLNPLIYSLRNKEGK.

Residues 1 to 25 (MGRGNSTEVTEFHLLGFGVQHEFQH) are Extracellular-facing. The N-linked (GlcNAc...) asparagine glycan is linked to asparagine 5. Residues 26–46 (VLFIVLLLIYVTSLIGNIGMI) traverse the membrane as a helical segment. Topologically, residues 47–54 (LLIKTDSR) are cytoplasmic. The chain crosses the membrane as a helical span at residues 55–75 (LQTPMYFFPQHLAFVDICYTS). Topologically, residues 76 to 99 (AITPKMLQSFTEENNLITFRGCVI) are extracellular. Cysteine 97 and cysteine 189 are joined by a disulfide. A helical membrane pass occupies residues 100–120 (QFLVYATFATSDCYLLAIMAM). Topologically, residues 121-133 (DCYVAICKPLRYP) are cytoplasmic. Residues 134–154 (MIMSQTVYIQLVAGSYIIGSI) traverse the membrane as a helical segment. Asparagine 155 carries N-linked (GlcNAc...) asparagine glycosylation. The Extracellular segment spans residues 155-196 (NASVHTGFTFSLSFCKSNKINHFFCDGLPILALSCSNIDINI). A helical transmembrane segment spans residues 197–217 (ILDVVFVGFDLMFTELVIIFS). Residues 218-237 (YIYIMVTILKMSSTAGRKKS) lie on the Cytoplasmic side of the membrane. The chain crosses the membrane as a helical span at residues 238–258 (FSTCASHLTAVTIFYGTLSYM). Residues 259 to 271 (YLQPQSNNSQENM) lie on the Extracellular side of the membrane. An N-linked (GlcNAc...) asparagine glycan is attached at asparagine 265. A helical membrane pass occupies residues 272–292 (KVASIFYGTVIPMLNPLIYSL). At 293-298 (RNKEGK) the chain is on the cytoplasmic side.

The protein belongs to the G-protein coupled receptor 1 family.

It localises to the cell membrane. In terms of biological role, odorant receptor. In Homo sapiens (Human), this protein is Olfactory receptor 5AK3 (OR5AK3P).